Reading from the N-terminus, the 529-residue chain is Delayed-rectifier potassium channel regulatory subunit KCNS1 (529 aa).

At 1-217 (MLMLLVRGTR…LTMENPGYSL (217 aa)) the chain is on the cytoplasmic side. Residues 218–239 (PSKLFSCVSISVVLASIAAMCI) traverse the membrane as a helical segment. Topologically, residues 240 to 270 (HSLPEYQAREAAAAVAAVAAGRSAEGVRDDP) are extracellular. Residues 271–293 (VLRRLEYFCIAWFSFEVSSRLLL) form a helical membrane-spanning segment. Residues 294-304 (APSTRNFFCHP) lie on the Cytoplasmic side of the membrane. A helical membrane pass occupies residues 305 to 322 (LNLIDIVSVLPFYLTLLA). Residues 323 to 340 (GAALGDHGGTGGKEFGHL) are Extracellular-facing. The chain crosses the membrane as a helical; Voltage-sensor span at residues 341–361 (GKVVQVFRLMRIFRVLKLARH). The Cytoplasmic segment spans residues 362 to 376 (STGLRSLGATLKHSY). Residues 377–398 (REVGILLLYLAVGVSVFSGVAY) traverse the membrane as a helical segment. Residues 399–411 (TAEKEEHVGFDTI) are Extracellular-facing. Positions 412–423 (PACWWWGTVSMT) form an intramembrane region, helical. A Selectivity filter motif is present at residues 424 to 429 (TVGYGD). An intramembrane segment occupies 424 to 431 (TVGYGDVV). Residues 432–438 (PVTVAGK) are Extracellular-facing. The chain crosses the membrane as a helical span at residues 439-467 (LAASGCILGGILVVALPITIIFNKFSHFY). The Cytoplasmic portion of the chain corresponds to 468 to 529 (RRQKALEAAV…PSEPPHSQMY (62 aa)). Positions 494 to 529 (GVSEASLETSRETSQEGRSADLETQVPSEPPHSQMY) are disordered. Over residues 502–514 (TSRETSQEGRSAD) the composition is skewed to basic and acidic residues.

The protein belongs to the potassium channel family. S (TC 1.A.1.2) subfamily. Kv9.1/KCNS1 sub-subfamily. Heterotetramer with KCNB1. Heterotetramer with KCNB2. Does not form homomultimers.

It is found in the cell membrane. In terms of biological role, potassium channel regulatory subunit that modulate the delayed rectifier voltage-gated potassium channel activity of KCNB1 and KCNB2 by altering their kinetics, expression levels, and shifting the half-inactivation potential to more polarized values. While it does not form functional channels on its own, it can form functional heterotetrameric channels with KCNB1 and KCNB2. Each regulatory subunit has unique regulatory properties that can lead to extensive inhibition, significant changes in kinetics, and/or substantial shifts in the voltage dependencies of the inactivation process. The sequence is that of Delayed-rectifier potassium channel regulatory subunit KCNS1 from Aotus nancymaae (Ma's night monkey).